The sequence spans 129 residues: Small ribosomal subunit protein uS11 (129 aa).

It belongs to the universal ribosomal protein uS11 family. As to quaternary structure, part of the 30S ribosomal subunit. Interacts with proteins S7 and S18. Binds to IF-3.

Located on the platform of the 30S subunit, it bridges several disparate RNA helices of the 16S rRNA. Forms part of the Shine-Dalgarno cleft in the 70S ribosome. This chain is Small ribosomal subunit protein uS11, found in Aliivibrio fischeri (strain ATCC 700601 / ES114) (Vibrio fischeri).